The chain runs to 128 residues: Large ribosomal subunit protein bL17 (128 aa).

Belongs to the bacterial ribosomal protein bL17 family. As to quaternary structure, part of the 50S ribosomal subunit. Contacts protein L32.

The polypeptide is Large ribosomal subunit protein bL17 (Erwinia tasmaniensis (strain DSM 17950 / CFBP 7177 / CIP 109463 / NCPPB 4357 / Et1/99)).